Here is a 585-residue protein sequence, read N- to C-terminus: Proline--tRNA ligase (585 aa).

Lysine 173 is covalently cross-linked (Isoglutamyl lysine isopeptide (Lys-Gln) (interchain with Q-Cter in protein Pup)).

It belongs to the class-II aminoacyl-tRNA synthetase family. ProS type 1 subfamily. In terms of assembly, homodimer.

It is found in the cytoplasm. It carries out the reaction tRNA(Pro) + L-proline + ATP = L-prolyl-tRNA(Pro) + AMP + diphosphate. Its function is as follows. Catalyzes the attachment of proline to tRNA(Pro) in a two-step reaction: proline is first activated by ATP to form Pro-AMP and then transferred to the acceptor end of tRNA(Pro). As ProRS can inadvertently accommodate and process non-cognate amino acids such as alanine and cysteine, to avoid such errors it has two additional distinct editing activities against alanine. One activity is designated as 'pretransfer' editing and involves the tRNA(Pro)-independent hydrolysis of activated Ala-AMP. The other activity is designated 'posttransfer' editing and involves deacylation of mischarged Ala-tRNA(Pro). The misacylated Cys-tRNA(Pro) is not edited by ProRS. This chain is Proline--tRNA ligase (proS), found in Mycolicibacterium smegmatis (strain ATCC 700084 / mc(2)155) (Mycobacterium smegmatis).